Consider the following 656-residue polypeptide: DNA ligase (656 aa).

NAD(+)-binding positions include 32–36 (DAVYD) and 81–82 (SL). The active-site N6-AMP-lysine intermediate is Lys-112. NAD(+) is bound by residues Arg-133, Glu-167, and Lys-306. Zn(2+) contacts are provided by Cys-400, Cys-403, Cys-416, and Cys-421. One can recognise a BRCT domain in the interval 577–656 (KSSSVFNNKT…ELLKRLKELD (80 aa)).

This sequence belongs to the NAD-dependent DNA ligase family. LigA subfamily. It depends on Mg(2+) as a cofactor. Mn(2+) is required as a cofactor.

The enzyme catalyses NAD(+) + (deoxyribonucleotide)n-3'-hydroxyl + 5'-phospho-(deoxyribonucleotide)m = (deoxyribonucleotide)n+m + AMP + beta-nicotinamide D-nucleotide.. Its function is as follows. DNA ligase that catalyzes the formation of phosphodiester linkages between 5'-phosphoryl and 3'-hydroxyl groups in double-stranded DNA using NAD as a coenzyme and as the energy source for the reaction. It is essential for DNA replication and repair of damaged DNA. The sequence is that of DNA ligase from Helicobacter pylori (strain HPAG1).